Consider the following 457-residue polypeptide: Siroheme synthase 2 (457 aa).

Residues 1–204 (MDHLPIFCQL…DDEQAVTRIT (204 aa)) form a precorrin-2 dehydrogenase /sirohydrochlorin ferrochelatase region. NAD(+)-binding positions include 22–23 (DV) and 43–44 (LA). Serine 128 carries the post-translational modification Phosphoserine. The interval 216–457 (GEVVLVGAGP…RDKLNWFSSK (242 aa)) is uroporphyrinogen-III C-methyltransferase. Residue proline 225 coordinates S-adenosyl-L-methionine. The active-site Proton acceptor is aspartate 248. Catalysis depends on lysine 270, which acts as the Proton donor. S-adenosyl-L-methionine-binding positions include 301 to 303 (GGD), isoleucine 306, 331 to 332 (TA), methionine 382, and glycine 411.

This sequence in the N-terminal section; belongs to the precorrin-2 dehydrogenase / sirohydrochlorin ferrochelatase family. It in the C-terminal section; belongs to the precorrin methyltransferase family.

It catalyses the reaction uroporphyrinogen III + 2 S-adenosyl-L-methionine = precorrin-2 + 2 S-adenosyl-L-homocysteine + H(+). The enzyme catalyses precorrin-2 + NAD(+) = sirohydrochlorin + NADH + 2 H(+). It carries out the reaction siroheme + 2 H(+) = sirohydrochlorin + Fe(2+). It functions in the pathway cofactor biosynthesis; adenosylcobalamin biosynthesis; precorrin-2 from uroporphyrinogen III: step 1/1. Its pathway is cofactor biosynthesis; adenosylcobalamin biosynthesis; sirohydrochlorin from precorrin-2: step 1/1. It participates in porphyrin-containing compound metabolism; siroheme biosynthesis; precorrin-2 from uroporphyrinogen III: step 1/1. The protein operates within porphyrin-containing compound metabolism; siroheme biosynthesis; siroheme from sirohydrochlorin: step 1/1. It functions in the pathway porphyrin-containing compound metabolism; siroheme biosynthesis; sirohydrochlorin from precorrin-2: step 1/1. Its function is as follows. Multifunctional enzyme that catalyzes the SAM-dependent methylations of uroporphyrinogen III at position C-2 and C-7 to form precorrin-2 via precorrin-1. Then it catalyzes the NAD-dependent ring dehydrogenation of precorrin-2 to yield sirohydrochlorin. Finally, it catalyzes the ferrochelation of sirohydrochlorin to yield siroheme. The chain is Siroheme synthase 2 from Cronobacter sakazakii (strain ATCC BAA-894) (Enterobacter sakazakii).